Here is a 243-residue protein sequence, read N- to C-terminus: Anti-H(O) lectin 1 (243 aa).

Asn-10 is a glycosylation site (N-linked (GlcNAc...) asparagine; partial). Asn-116 is a glycosylation site (N-linked (GlcNAc...) asparagine). Glu-126 and Asp-128 together coordinate Mn(2+). Residues Asp-128, Asn-135, and Asp-138 each contribute to the Ca(2+) site. Residues Asp-138 and His-143 each coordinate Mn(2+).

It belongs to the leguminous lectin family.

In terms of biological role, L-fucose specific lectin. The sequence is that of Anti-H(O) lectin 1 from Ulex europaeus (Furze).